Here is a 235-residue protein sequence, read N- to C-terminus: UPF0702 transmembrane protein YdfS (235 aa).

The next 2 membrane-spanning stretches (helical) occupy residues 32 to 52 (MTIF…GLAY) and 60 to 80 (NMAI…FLSI).

This sequence belongs to the UPF0702 family.

It is found in the cell membrane. This is UPF0702 transmembrane protein YdfS (ydfS) from Bacillus subtilis (strain 168).